We begin with the raw amino-acid sequence, 763 residues long: MGPPLLPKHVTAVIKCQKDPMKALEMFNSMRKEVGFKHTLSTYRSVIEKLGYYGKFEAMEEVLVDMRENVGNHMLEGVYVGAMKNYGRKGKVQEAVNVFERMDFYDCEPTVFSYNAIMSVLVDSGYFDQAHKVYMRMRDRGITPDVYSFTIRMKSFCKTSRPHAALRLLNNMSSQGCEMNVVAYCTVVGGFYEENFKAEGYELFGKMLASGVSLCLSTFNKLLRVLCKKGDVKECEKLLDKVIKRGVLPNLFTYNLFIQGLCQRGELDGAVRMVGCLIEQGPKPDVITYNNLIYGLCKNSKFQEAEVYLGKMVNEGLEPDSYTYNTLIAGYCKGGMVQLAERIVGDAVFNGFVPDQFTYRSLIDGLCHEGETNRALALFNEALGKGIKPNVILYNTLIKGLSNQGMILEAAQLANEMSEKGLIPEVQTFNILVNGLCKMGCVSDADGLVKVMISKGYFPDIFTFNILIHGYSTQLKMENALEILDVMLDNGVDPDVYTYNSLLNGLCKTSKFEDVMETYKTMVEKGCAPNLFTFNILLESLCRYRKLDEALGLLEEMKNKSVNPDAVTFGTLIDGFCKNGDLDGAYTLFRKMEEAYKVSSSTPTYNIIIHAFTEKLNVTMAEKLFQEMVDRCLGPDGYTYRLMVDGFCKTGNVNLGYKFLLEMMENGFIPSLTTLGRVINCLCVEDRVYEAAGIIHRMVQKGLVPEAVNTICDVDKKEVAAPKLVLEDLLKKSCITYYAYELLFDGLRDKRLRKKKGFTVVAI.

PPR repeat units lie at residues 39–69 (TLSTYRSVIEKLGYYGKFEAMEEVLVDMREN), 75–109 (LEGVYVGAMKNYGRKGKVQEAVNVFERMDFYDCEP), 110–144 (TVFSYNAIMSVLVDSGYFDQAHKVYMRMRDRGITP), 145–179 (DVYSFTIRMKSFCKTSRPHAALRLLNNMSSQGCEM), 180–214 (NVVAYCTVVGGFYEENFKAEGYELFGKMLASGVSL), 215–249 (CLSTFNKLLRVLCKKGDVKECEKLLDKVIKRGVLP), 250–284 (NLFTYNLFIQGLCQRGELDGAVRMVGCLIEQGPKP), 285–319 (DVITYNNLIYGLCKNSKFQEAEVYLGKMVNEGLEP), 320–354 (DSYTYNTLIAGYCKGGMVQLAERIVGDAVFNGFVP), 355–389 (DQFTYRSLIDGLCHEGETNRALALFNEALGKGIKP), 390–424 (NVILYNTLIKGLSNQGMILEAAQLANEMSEKGLIP), 425–459 (EVQTFNILVNGLCKMGCVSDADGLVKVMISKGYFP), 460–494 (DIFTFNILIHGYSTQLKMENALEILDVMLDNGVDP), 495–529 (DVYTYNSLLNGLCKTSKFEDVMETYKTMVEKGCAP), 530–564 (NLFTFNILLESLCRYRKLDEALGLLEEMKNKSVNP), 565–595 (DAVTFGTLIDGFCKNGDLDGAYTLFRKMEEA), 601–635 (STPTYNIIIHAFTEKLNVTMAEKLFQEMVDRCLGP), 636–670 (DGYTYRLMVDGFCKTGNVNLGYKFLLEMMENGFIP), and 671–705 (SLTTLGRVINCLCVEDRVYEAAGIIHRMVQKGLVP).

It belongs to the PPR family. P subfamily.

This Arabidopsis thaliana (Mouse-ear cress) protein is Putative pentatricopeptide repeat-containing protein At1g74580.